The chain runs to 233 residues: MFRIIKWLIALPVGIFIFFNAYVYGNIITYRAVAPHRTAFMSMRMKQFEQEGRDVALDYRWMPYKRISTNLKKALIASEDARFAGHGGFDWGGIQNAIRRNRNSGKVKAGGSTISQQLAKNLFLNESRSYIRKGEEAAITAMMEAVTDKDRIFELYLNSIEWHYGVFGAEAASRYFYQIPAAKLTKQQAAKLTARVPAPLYYADHPKSKRLRNKTNIVLRRMGSAELPESDTD.

A helical transmembrane segment spans residues 8 to 28 (LIALPVGIFIFFNAYVYGNII).

This sequence belongs to the glycosyltransferase 51 family.

It is found in the cell inner membrane. The enzyme catalyses [GlcNAc-(1-&gt;4)-Mur2Ac(oyl-L-Ala-gamma-D-Glu-L-Lys-D-Ala-D-Ala)](n)-di-trans,octa-cis-undecaprenyl diphosphate + beta-D-GlcNAc-(1-&gt;4)-Mur2Ac(oyl-L-Ala-gamma-D-Glu-L-Lys-D-Ala-D-Ala)-di-trans,octa-cis-undecaprenyl diphosphate = [GlcNAc-(1-&gt;4)-Mur2Ac(oyl-L-Ala-gamma-D-Glu-L-Lys-D-Ala-D-Ala)](n+1)-di-trans,octa-cis-undecaprenyl diphosphate + di-trans,octa-cis-undecaprenyl diphosphate + H(+). It functions in the pathway cell wall biogenesis; peptidoglycan biosynthesis. Peptidoglycan polymerase that catalyzes glycan chain elongation from lipid-linked precursors. The protein is Biosynthetic peptidoglycan transglycosylase of Neisseria meningitidis serogroup A / serotype 4A (strain DSM 15465 / Z2491).